We begin with the raw amino-acid sequence, 401 residues long: MQKLTILGATGSIGASTLKVVEQNPELFSIVALAASTNVEKMVALCRKWQPKYAVMADKAAALALQSELASVSPSTEVLGGVDALCHVSALEEVDSVMAAIVGAAGLLPTMAAVKAGKRVLLANKEALVMSGQLFIDAVEEHGAELLPVDSEHNAIFQCLPQQVQTSLGRCNLEEHGISSILLTGSGGPFRYTDIAELEKVTPAQAIAHPNWSMGPKISVDSATMMNKGLEYIEAKWLFNAAREQLKVIIHPQSVIHSMVQYRDGSVLAQMGEPDMATPIALTMSYPSRVDAGVKPLDVTQVGELTFLQPDFARYPCLKLAIDACYEGQHATTALNAANEVAVDAFLNNRLGFTDIARINESVLNKITASHKSENVNSLESLIELDRMSRTIALEFLRERS.

6 residues coordinate NADPH: Thr10, Gly11, Ser12, Ile13, Asn38, and Asn124. Lys125 serves as a coordination point for 1-deoxy-D-xylulose 5-phosphate. Glu126 lines the NADPH pocket. Asp150 provides a ligand contact to Mn(2+). 4 residues coordinate 1-deoxy-D-xylulose 5-phosphate: Ser151, Glu152, Ser186, and His209. Glu152 contributes to the Mn(2+) binding site. Gly215 contributes to the NADPH binding site. Residues Ser222, Asn227, Lys228, and Glu231 each contribute to the 1-deoxy-D-xylulose 5-phosphate site. Glu231 is a Mn(2+) binding site.

It belongs to the DXR family. Requires Mg(2+) as cofactor. Mn(2+) is required as a cofactor.

It carries out the reaction 2-C-methyl-D-erythritol 4-phosphate + NADP(+) = 1-deoxy-D-xylulose 5-phosphate + NADPH + H(+). It participates in isoprenoid biosynthesis; isopentenyl diphosphate biosynthesis via DXP pathway; isopentenyl diphosphate from 1-deoxy-D-xylulose 5-phosphate: step 1/6. Catalyzes the NADPH-dependent rearrangement and reduction of 1-deoxy-D-xylulose-5-phosphate (DXP) to 2-C-methyl-D-erythritol 4-phosphate (MEP). The protein is 1-deoxy-D-xylulose 5-phosphate reductoisomerase of Vibrio campbellii (strain ATCC BAA-1116).